The primary structure comprises 197 residues: MPKDAPAGLAPGFLVAAPALADPNFNGSLVLMAEHHAQGALGFVVNRPGPITVADVLGGLDERLRERAEGAGRADDPVLVGGPVQPERLWILFRPGPTAPEEGAVALGSGLALGGSRELLEALVRSRDPGPYLLLLGYAGWAPLQIEHEVGEGAWVPLPLQGDLVFDVPMEKRWETAVRRLGLDPAGFLVGGGGAEA.

Belongs to the UPF0301 (AlgH) family.

This Anaeromyxobacter dehalogenans (strain 2CP-C) protein is UPF0301 protein Adeh_3962.